The following is a 162-amino-acid chain: CD-NTase-associated protein 7 (162 aa).

Positions 138–162 (HSGLTQSGGREYSSNGYGMQRKDYN) are disordered. A compositionally biased stretch (polar residues) spans 139–154 (SGLTQSGGREYSSNGY).

Belongs to the HORMA family. HORMA1 subfamily. Forms complexes with CdnC with 1:1 and 2:2 stoichimetry, and a 1:1:6 CdnC:Cap7:Cap6 complex.

Its function is as follows. Sensor protein of a CBASS antivirus system. CBASS (cyclic oligonucleotide-based antiphage signaling system) provides immunity against bacteriophage. The CD-NTase protein synthesizes cyclic nucleotides in response to infection; these serve as specific second messenger signals. The signals activate a diverse range of effectors, leading to bacterial cell death and thus abortive phage infection. A type III CBASS system. Expression of this CBASS system (Cap18-Cap6-Cap7-CdnC-CapW-Cap17) in a susceptible E.coli (strain MG1655) confers resistance to bacteriophage P1. The sensor protein for this CBASS system. Binds to a closure peptide, which allows it to activate CdnC for second messenger synthesis. The sequence is that of CD-NTase-associated protein 7 from Escherichia coli (strain KTE188).